The sequence spans 330 residues: DNA-directed RNA polymerase subunit alpha (330 aa).

The tract at residues 1–225 is alpha N-terminal domain (alpha-NTD); it reads MSDLAIPTIS…KQFAALVSHN (225 aa). An alpha C-terminal domain (alpha-CTD) region spans residues 237–330; sequence VKYAIPEEKY…KKKNKGMDEA (94 aa).

This sequence belongs to the RNA polymerase alpha chain family. In terms of assembly, homodimer. The RNAP catalytic core consists of 2 alpha, 1 beta, 1 beta' and 1 omega subunit. When a sigma factor is associated with the core the holoenzyme is formed, which can initiate transcription.

The enzyme catalyses RNA(n) + a ribonucleoside 5'-triphosphate = RNA(n+1) + diphosphate. Its function is as follows. DNA-dependent RNA polymerase catalyzes the transcription of DNA into RNA using the four ribonucleoside triphosphates as substrates. This Dehalococcoides mccartyi (strain ATCC BAA-2266 / KCTC 15142 / 195) (Dehalococcoides ethenogenes (strain 195)) protein is DNA-directed RNA polymerase subunit alpha.